The following is a 131-amino-acid chain: MESKAQEIILSCEINSIERGSLKNLSIIHMSCNDFNISFDIIDSINIFSQKEKVKAFISKNRLSYTNDDFCGHGYIVTELKDSSSNNGNRYITIISLFGLLVKIISNKESFLKIHQLNVMDHIYFCVKKNT.

This sequence belongs to the archaeal Rpo8 RNA polymerase subunit family. Part of the 13-subunit RNA polymerase complex. Interacts with Rpo1N on the periphery of the clamp head.

It is found in the cytoplasm. The catalysed reaction is RNA(n) + a ribonucleoside 5'-triphosphate = RNA(n+1) + diphosphate. DNA-dependent RNA polymerase (RNAP) catalyzes the transcription of DNA into RNA using the four ribonucleoside triphosphates as substrates. The chain is DNA-directed RNA polymerase subunit Rpo8 from Saccharolobus shibatae (strain ATCC 51178 / DSM 5389 / JCM 8931 / NBRC 15437 / B12) (Sulfolobus shibatae).